The following is a 291-amino-acid chain: Acetyl-coenzyme A carboxylase carboxyl transferase subunit beta (291 aa).

The region spanning 23–291 (VWHKCPSCTA…PPDLPVEESV (269 aa)) is the CoA carboxyltransferase N-terminal domain. Zn(2+)-binding residues include Cys27, Cys30, Cys46, and Cys49. The C4-type zinc finger occupies 27-49 (CPSCTAVLYRVELERNLEVCPKC).

It belongs to the AccD/PCCB family. Acetyl-CoA carboxylase is a heterohexamer composed of biotin carboxyl carrier protein (AccB), biotin carboxylase (AccC) and two subunits each of ACCase subunit alpha (AccA) and ACCase subunit beta (AccD). Zn(2+) is required as a cofactor.

Its subcellular location is the cytoplasm. It catalyses the reaction N(6)-carboxybiotinyl-L-lysyl-[protein] + acetyl-CoA = N(6)-biotinyl-L-lysyl-[protein] + malonyl-CoA. It participates in lipid metabolism; malonyl-CoA biosynthesis; malonyl-CoA from acetyl-CoA: step 1/1. Functionally, component of the acetyl coenzyme A carboxylase (ACC) complex. Biotin carboxylase (BC) catalyzes the carboxylation of biotin on its carrier protein (BCCP) and then the CO(2) group is transferred by the transcarboxylase to acetyl-CoA to form malonyl-CoA. The chain is Acetyl-coenzyme A carboxylase carboxyl transferase subunit beta from Coxiella burnetii (strain RSA 331 / Henzerling II).